Consider the following 425-residue polypeptide: Serine--tRNA ligase (425 aa).

229–231 serves as a coordination point for L-serine; that stretch reads TSE. Residues 259 to 261 and V275 contribute to the ATP site; that span reads RKE. L-serine is bound at residue E282. ATP is bound at residue 349–352; sequence EVTS. T384 lines the L-serine pocket.

The protein belongs to the class-II aminoacyl-tRNA synthetase family. Type-1 seryl-tRNA synthetase subfamily. As to quaternary structure, homodimer. The tRNA molecule binds across the dimer.

It localises to the cytoplasm. The enzyme catalyses tRNA(Ser) + L-serine + ATP = L-seryl-tRNA(Ser) + AMP + diphosphate + H(+). It catalyses the reaction tRNA(Sec) + L-serine + ATP = L-seryl-tRNA(Sec) + AMP + diphosphate + H(+). The protein operates within aminoacyl-tRNA biosynthesis; selenocysteinyl-tRNA(Sec) biosynthesis; L-seryl-tRNA(Sec) from L-serine and tRNA(Sec): step 1/1. Its function is as follows. Catalyzes the attachment of serine to tRNA(Ser). Is also able to aminoacylate tRNA(Sec) with serine, to form the misacylated tRNA L-seryl-tRNA(Sec), which will be further converted into selenocysteinyl-tRNA(Sec). In Borreliella burgdorferi (strain ATCC 35210 / DSM 4680 / CIP 102532 / B31) (Borrelia burgdorferi), this protein is Serine--tRNA ligase.